Here is a 624-residue protein sequence, read N- to C-terminus: MFNLLDNYKDVNDIKKMSLDEKKQLALEIREFLIENVSKTGGHLASNLGVVELTLSLFSIFDLNHDKLIWDVGHQAYVHKLLTGRKDKFHTLRQFGGISGFPKKCESVYDFFETGHSSTSISAALGMARARDLKGEKHNVVAVIGDGALTGGMALEALNDVGYRKTKLIIILNDNQMSIGKNVGGVSRYLNKLRVDPKYNKFKEEVESTLKKIPNIGKGMAKYLERLKNGIKKMVVSGMFFEDIGIKYLGPIDGHNIKDLTEVMTAAKKVNNPVIIHVITKKGKGYEFAEKNPGKFHGIGPFNCNNGEIAATSTNTYSKVFGDEMVNLAREDKKIVVITAAMRDGTGLQNFAKEFPERFFDVGIAEQHAVTLAGGMAVEGLKPVFAVYSTFLQRSYDQLLHDICIQKLPVVFAVDRAGIVGDDGETHQGIFDLSYLTEMPNMTVMSPKCMAELTHMLKWALNQNCPIAIRYPRGGDNVYLTPLEDFEFGRWEYILNKGKIALVAQGRMVEHAVLAAEKLEQMGILVRVISACFIKPLDKVMLKKLIEEDVTIITIEDNIIRGGLGSYILEYVNTLHRKVDVINLGFKDEFVRHGKPSILYKLYGLDTGSIVDKVLKVVKLSGIF.

Residues histidine 74 and 115-117 (GHS) each bind thiamine diphosphate. Position 146 (aspartate 146) interacts with Mg(2+). Residues 147–148 (GA), asparagine 175, tyrosine 286, and glutamate 366 each bind thiamine diphosphate. Residue asparagine 175 participates in Mg(2+) binding.

It belongs to the transketolase family. DXPS subfamily. As to quaternary structure, homodimer. Mg(2+) serves as cofactor. Thiamine diphosphate is required as a cofactor.

It carries out the reaction D-glyceraldehyde 3-phosphate + pyruvate + H(+) = 1-deoxy-D-xylulose 5-phosphate + CO2. It functions in the pathway metabolic intermediate biosynthesis; 1-deoxy-D-xylulose 5-phosphate biosynthesis; 1-deoxy-D-xylulose 5-phosphate from D-glyceraldehyde 3-phosphate and pyruvate: step 1/1. Its function is as follows. Catalyzes the acyloin condensation reaction between C atoms 2 and 3 of pyruvate and glyceraldehyde 3-phosphate to yield 1-deoxy-D-xylulose-5-phosphate (DXP). The polypeptide is 1-deoxy-D-xylulose-5-phosphate synthase (Clostridium kluyveri (strain NBRC 12016)).